The chain runs to 151 residues: Ribosome-binding factor A (151 aa).

A disordered region spans residues 120–151; that stretch reads RSPKVVRDLDDTSSDDTSPDANTDTDKETDAE.

This sequence belongs to the RbfA family. As to quaternary structure, monomer. Binds 30S ribosomal subunits, but not 50S ribosomal subunits or 70S ribosomes.

The protein localises to the cytoplasm. Its function is as follows. One of several proteins that assist in the late maturation steps of the functional core of the 30S ribosomal subunit. Associates with free 30S ribosomal subunits (but not with 30S subunits that are part of 70S ribosomes or polysomes). Required for efficient processing of 16S rRNA. May interact with the 5'-terminal helix region of 16S rRNA. This Xanthobacter autotrophicus (strain ATCC BAA-1158 / Py2) protein is Ribosome-binding factor A.